A 140-amino-acid polypeptide reads, in one-letter code: ATP synthase epsilon chain (140 aa).

It belongs to the ATPase epsilon chain family. As to quaternary structure, F-type ATPases have 2 components, CF(1) - the catalytic core - and CF(0) - the membrane proton channel. CF(1) has five subunits: alpha(3), beta(3), gamma(1), delta(1), epsilon(1). CF(0) has three main subunits: a, b and c.

Its subcellular location is the cell membrane. Produces ATP from ADP in the presence of a proton gradient across the membrane. The protein is ATP synthase epsilon chain (atpC) of Enterococcus hirae (strain ATCC 9790 / DSM 20160 / JCM 8729 / LMG 6399 / NBRC 3181 / NCIMB 6459 / NCDO 1258 / NCTC 12367 / WDCM 00089 / R).